The following is a 201-amino-acid chain: Holliday junction branch migration complex subunit RuvA (201 aa).

The tract at residues 1–63 (MYDYIKGTVT…EDNISLFGFQ (63 aa)) is domain I. The domain II stretch occupies residues 64-142 (TTEERYLFKK…DVVASEIVYV (79 aa)). The tract at residues 143–153 (APENDMVAGLS) is flexible linker. Residues 153-201 (SPQLEEAVLALEALGYSTRELKKVIPKLAKEADLTSDAYIKLALQLMTK) form a domain III region.

The protein belongs to the RuvA family. As to quaternary structure, homotetramer. Forms an RuvA(8)-RuvB(12)-Holliday junction (HJ) complex. HJ DNA is sandwiched between 2 RuvA tetramers; dsDNA enters through RuvA and exits via RuvB. An RuvB hexamer assembles on each DNA strand where it exits the tetramer. Each RuvB hexamer is contacted by two RuvA subunits (via domain III) on 2 adjacent RuvB subunits; this complex drives branch migration. In the full resolvosome a probable DNA-RuvA(4)-RuvB(12)-RuvC(2) complex forms which resolves the HJ.

The protein resides in the cytoplasm. In terms of biological role, the RuvA-RuvB-RuvC complex processes Holliday junction (HJ) DNA during genetic recombination and DNA repair, while the RuvA-RuvB complex plays an important role in the rescue of blocked DNA replication forks via replication fork reversal (RFR). RuvA specifically binds to HJ cruciform DNA, conferring on it an open structure. The RuvB hexamer acts as an ATP-dependent pump, pulling dsDNA into and through the RuvAB complex. HJ branch migration allows RuvC to scan DNA until it finds its consensus sequence, where it cleaves and resolves the cruciform DNA. The chain is Holliday junction branch migration complex subunit RuvA from Listeria monocytogenes serovar 1/2a (strain ATCC BAA-679 / EGD-e).